The sequence spans 350 residues: Very-long-chain 3-oxoacyl-CoA reductase (350 aa).

The helical transmembrane segment at Ser28–Val48 threads the bilayer. Positions 79, 134, 161, 196, 228, 232, 261, and 263 each coordinate NADP(+). Tyr228 serves as the catalytic Proton donor. Lys232 (lowers pKa of active site Tyr) is an active-site residue.

This sequence belongs to the short-chain dehydrogenases/reductases (SDR) family.

Its subcellular location is the endoplasmic reticulum membrane. It carries out the reaction a very-long-chain (3R)-3-hydroxyacyl-CoA + NADP(+) = a very-long-chain 3-oxoacyl-CoA + NADPH + H(+). It participates in lipid metabolism; fatty acid biosynthesis. Its function is as follows. Component of the microsomal membrane bound fatty acid elongation system, which produces the 26-carbon very long-chain fatty acids (VLCFA) from palmitate. Catalyzes the reduction of the 3-ketoacyl-CoA intermediate that is formed in each cycle of fatty acid elongation. VLCFAs serve as precursors for ceramide and sphingolipids. This chain is Very-long-chain 3-oxoacyl-CoA reductase, found in Mycosarcoma maydis (Corn smut fungus).